The primary structure comprises 200 residues: MSFVTENPWLMVLTIFIINVCYVTFLTMRTILTLKGYRYIAASVSFLEVLVYIVGLGLVMSNLDHIQNIIAYAFGFSIGIIVGMKIEEKLALGYTVVNVTSAEYELDLPNELRNLGYGVTHYAAFGRDGSRMVMQILTPRKYERKLMDTIKNLDPKAFIIAYEPRNIHGGFWTKGIRRRKLKDYEPEELESVVEHEIQSK.

The next 3 helical transmembrane spans lie at Pro8–Met28, Ile40–Met60, and Ile66–Ile86.

Belongs to the UPF0316 family.

It localises to the cell membrane. In Staphylococcus aureus (strain COL), this protein is UPF0316 protein SACOL1973.